We begin with the raw amino-acid sequence, 233 residues long: Pilin-like protein PilA3 (233 aa).

A propeptide spans 1-4 (leader sequence); sequence MKRG. An N-methylphenylalanine modification is found at Phe5. Residues 5–25 traverse the membrane as a helical segment; the sequence is FTLVEVLVAMAILVVVLAVGV. Residues 121-143 form a disordered region; it reads LRRSDVNATPSSGSDCTTPPPNS. A compositionally biased stretch (polar residues) spans 126 to 137; it reads VNATPSSGSDCT.

The protein localises to the cell inner membrane. It localises to the cell outer membrane. It is found in the periplasm. Its function is as follows. Plays an essential role in natural DNA transformation but is not required for pilus biogenesis. This Thermus thermophilus (strain ATCC BAA-163 / DSM 7039 / HB27) protein is Pilin-like protein PilA3 (pilA3).